We begin with the raw amino-acid sequence, 283 residues long: ATP synthase gamma chain (283 aa).

This sequence belongs to the ATPase gamma chain family. F-type ATPases have 2 components, CF(1) - the catalytic core - and CF(0) - the membrane proton channel. CF(1) has five subunits: alpha(3), beta(3), gamma(1), delta(1), epsilon(1). CF(0) has three main subunits: a, b and c.

Its subcellular location is the cell inner membrane. Its function is as follows. Produces ATP from ADP in the presence of a proton gradient across the membrane. The gamma chain is believed to be important in regulating ATPase activity and the flow of protons through the CF(0) complex. This is ATP synthase gamma chain from Ehrlichia ruminantium (strain Welgevonden).